The chain runs to 350 residues: MPVLHNRISNDALKAKMLAESEPRTTISFYKYFHIADPKVTRDALYQLFTALNVFGRVYLAHEGINAQISVPASNVETFRAQLYAFDPALEGLRLNIALDDDGKSFWVLRMKVRDRIVADGIDDPLFDASNVGEYLQAAEVNAMLDDPDALFIDMRNHYEYEVGHFENALEIPADTFREQLPKAVEMMQAHKDKKIVMYCTGGIRCEKASAWMKHNGFNKVWHIEGGIIEYARKAREQGLPVRFIGKNFVFDERMGERISDEIIAHCHQCGAPCDSHTNCKNDGCHLLFIQCPVCAEKYKGCCSEICCEESALPPEEQRRRRAGRENGNKIFNKSRGRLNTTLGIPEPTE.

Positions 146 to 240 constitute a Rhodanese domain; that stretch reads DDPDALFIDM…YARKAREQGL (95 aa). The active-site Cysteine persulfide intermediate is the Cys200.

It belongs to the TrhO family.

The catalysed reaction is uridine(34) in tRNA + AH2 + O2 = 5-hydroxyuridine(34) in tRNA + A + H2O. Catalyzes oxygen-dependent 5-hydroxyuridine (ho5U) modification at position 34 in tRNAs, the first step in 5-carboxymethoxyuridine (cmo5U) biosynthesis. May be part of an alternate pathway, which is able to bypass cmo5U biogenesis in a subset of tRNAs under aerobic conditions. This is tRNA uridine(34) hydroxylase from Escherichia coli O81 (strain ED1a).